The primary structure comprises 138 residues: uncharacterized protein (138 aa).

The chain crosses the membrane as a helical span at residues 19–40; the sequence is ECKVSVISFFLLAFLLMAHIWL. 3 consecutive repeat copies span residues 94 to 106, 107 to 119, and 120 to 132. The tract at residues 94-132 is 3 X 13 AA tandem repeats of K-G-E-I-E-G-K-E-E-K-K-E-[GV]; the sequence is KGEIEGKEEKKEGKGEIEGKEEKKEGKGEIEGKEEKKEV. Residues 98–138 form a disordered region; that stretch reads EGKEEKKEGKGEIEGKEEKKEGKGEIEGKEEKKEVENGPRK.

As to expression, expressed in roots, leaves and flowers.

The protein resides in the mitochondrion membrane. Involved in cytoplasmic male sterility (CMS) by leading to pollen abortion. Not expressed in fertile (normal) plants. This is an uncharacterized protein from Raphanus sativus (Radish).